We begin with the raw amino-acid sequence, 467 residues long: GTPase Der (467 aa).

2 EngA-type G domains span residues 25 to 188 and 199 to 372; these read PVVA…PEAP and RRVA…ASWE. GTP-binding positions include 31–38, 78–82, 140–143, 205–212, 252–256, and 317–320; these read GRPNVGKS, DTGGW, NKAD, DTAGL, and NKWD. In terms of domain architecture, KH-like spans 373–455; sequence TRVPTAQLNA…PIEISVRARK (83 aa).

It belongs to the TRAFAC class TrmE-Era-EngA-EngB-Septin-like GTPase superfamily. EngA (Der) GTPase family. In terms of assembly, associates with the 50S ribosomal subunit.

In terms of biological role, GTPase that plays an essential role in the late steps of ribosome biogenesis. In Salinispora tropica (strain ATCC BAA-916 / DSM 44818 / JCM 13857 / NBRC 105044 / CNB-440), this protein is GTPase Der.